A 438-amino-acid chain; its full sequence is MNIVALASAYGVGSISIVRLSGDGAYDLAINLCKKPLTPRYAHLRKLYCENMVFLDEAIVIYYKAPFSFTGEDVVEFQTHGGVVVANLIIDELLRLGARVANPGEFSKRAFLNGKMDLVKAESIQSLINARSEGAAKILARTMNGELSVFVNSLRDELIKILAYTETCIDYADDDLPSDILHSSKDLLLNSYKKLEHIINISNSKKGLIDGYKVAIIGRPNVGKSSILNSLLHYERAITSETAGTTRDTIEEQIKFGSHLVRIIDTAGIRDEFDSSIEAAGIEYSKRAAREADIIFCVFDSSQKASLEDRQILEFISNLNKKTIYVLNKSDLEFKFDISLNAVLVSAKLDSTPLSKELESYLNSQDTNDIMLSSNRQIEASRLASEAIKNALELLNESELELFAYELNIALKHIGSITKPMENSELLDKMFSSFCLGK.

(6S)-5-formyl-5,6,7,8-tetrahydrofolate-binding residues include Arg19, Glu76, and Lys115. The TrmE-type G domain occupies 211-363; the sequence is GYKVAIIGRP…LSKELESYLN (153 aa). Residues 221 to 226, 240 to 246, and 265 to 268 each bind GTP; these read NVGKSS, SETAGTT, and DTAG. Residues Ser225 and Thr246 each contribute to the Mg(2+) site. Lys438 contributes to the (6S)-5-formyl-5,6,7,8-tetrahydrofolate binding site.

It belongs to the TRAFAC class TrmE-Era-EngA-EngB-Septin-like GTPase superfamily. TrmE GTPase family. Homodimer. Heterotetramer of two MnmE and two MnmG subunits. It depends on K(+) as a cofactor.

It is found in the cytoplasm. In terms of biological role, exhibits a very high intrinsic GTPase hydrolysis rate. Involved in the addition of a carboxymethylaminomethyl (cmnm) group at the wobble position (U34) of certain tRNAs, forming tRNA-cmnm(5)s(2)U34. This chain is tRNA modification GTPase MnmE, found in Campylobacter fetus subsp. fetus (strain 82-40).